The following is a 139-amino-acid chain: Aspartate 1-decarboxylase (139 aa).

Catalysis depends on S26, which acts as the Schiff-base intermediate with substrate; via pyruvic acid. S26 carries the pyruvic acid (Ser) modification. T58 lines the substrate pocket. Y59 functions as the Proton donor in the catalytic mechanism. 72–74 (GGA) is a binding site for substrate.

The protein belongs to the PanD family. As to quaternary structure, heterooctamer of four alpha and four beta subunits. It depends on pyruvate as a cofactor. Is synthesized initially as an inactive proenzyme, which is activated by self-cleavage at a specific serine bond to produce a beta-subunit with a hydroxyl group at its C-terminus and an alpha-subunit with a pyruvoyl group at its N-terminus.

It localises to the cytoplasm. The enzyme catalyses L-aspartate + H(+) = beta-alanine + CO2. It functions in the pathway cofactor biosynthesis; (R)-pantothenate biosynthesis; beta-alanine from L-aspartate: step 1/1. In terms of biological role, catalyzes the pyruvoyl-dependent decarboxylation of aspartate to produce beta-alanine. This Microcystis aeruginosa (strain NIES-843 / IAM M-2473) protein is Aspartate 1-decarboxylase.